The sequence spans 316 residues: Holliday junction branch migration complex subunit RuvB (316 aa).

The interval 1–165 (MQITRPHNFE…FGYIARFVSY (165 aa)) is large ATPase domain (RuvB-L). Residues R5, G46, K49, T50, S51, 112–114 (EDF), R155, Y165, and R202 each bind ATP. Residue T50 coordinates Mg(2+). The tract at residues 166–236 (NAEDMKQIIR…IIKKTFKSLD (71 aa)) is small ATPAse domain (RuvB-S). The head domain (RuvB-H) stretch occupies residues 239-316 (EYGLTKDHVE…TYLLKEKLIW (78 aa)). DNA-binding residues include K294 and R299.

It belongs to the RuvB family. As to quaternary structure, homohexamer. Forms an RuvA(8)-RuvB(12)-Holliday junction (HJ) complex. HJ DNA is sandwiched between 2 RuvA tetramers; dsDNA enters through RuvA and exits via RuvB. An RuvB hexamer assembles on each DNA strand where it exits the tetramer. Each RuvB hexamer is contacted by two RuvA subunits (via domain III) on 2 adjacent RuvB subunits; this complex drives branch migration. In the full resolvosome a probable DNA-RuvA(4)-RuvB(12)-RuvC(2) complex forms which resolves the HJ.

The protein localises to the cytoplasm. It carries out the reaction ATP + H2O = ADP + phosphate + H(+). The RuvA-RuvB-RuvC complex processes Holliday junction (HJ) DNA during genetic recombination and DNA repair, while the RuvA-RuvB complex plays an important role in the rescue of blocked DNA replication forks via replication fork reversal (RFR). RuvA specifically binds to HJ cruciform DNA, conferring on it an open structure. The RuvB hexamer acts as an ATP-dependent pump, pulling dsDNA into and through the RuvAB complex. RuvB forms 2 homohexamers on either side of HJ DNA bound by 1 or 2 RuvA tetramers; 4 subunits per hexamer contact DNA at a time. Coordinated motions by a converter formed by DNA-disengaged RuvB subunits stimulates ATP hydrolysis and nucleotide exchange. Immobilization of the converter enables RuvB to convert the ATP-contained energy into a lever motion, pulling 2 nucleotides of DNA out of the RuvA tetramer per ATP hydrolyzed, thus driving DNA branch migration. The RuvB motors rotate together with the DNA substrate, which together with the progressing nucleotide cycle form the mechanistic basis for DNA recombination by continuous HJ branch migration. Branch migration allows RuvC to scan DNA until it finds its consensus sequence, where it cleaves and resolves cruciform DNA. The chain is Holliday junction branch migration complex subunit RuvB from Mycoplasmopsis synoviae (strain 53) (Mycoplasma synoviae).